Reading from the N-terminus, the 320-residue chain is Acetaldehyde dehydrogenase 2 (320 aa).

Cys-129 serves as the catalytic Acyl-thioester intermediate. NAD(+) contacts are provided by residues 160–168 and Asn-287; that span reads SAGPGTRAN.

The protein belongs to the acetaldehyde dehydrogenase family.

The catalysed reaction is acetaldehyde + NAD(+) + CoA = acetyl-CoA + NADH + H(+). The polypeptide is Acetaldehyde dehydrogenase 2 (Burkholderia cenocepacia (strain ATCC BAA-245 / DSM 16553 / LMG 16656 / NCTC 13227 / J2315 / CF5610) (Burkholderia cepacia (strain J2315))).